We begin with the raw amino-acid sequence, 518 residues long: Ethanolamine kinase (518 aa).

Polar residues predominate over residues 1–19 (MGTETKSNSYTGQISTSGG). The segment at 1 to 88 (MGTETKSNSY…DIRAKPEDKS (88 aa)) is disordered. A compositionally biased stretch (low complexity) spans 33-68 (QTVNQQTLSLSQSNQVQNQLNSHSNSNSYPNPSGSE). The segment covering 69–88 (NKNENEQNSRDIRAKPEDKS) has biased composition (basic and acidic residues). Residues serine 190 and serine 194 each carry the phosphoserine modification.

This sequence belongs to the choline/ethanolamine kinase family.

Its subcellular location is the cytoplasm. The catalysed reaction is ethanolamine + ATP = phosphoethanolamine + ADP + H(+). Its pathway is phospholipid metabolism; phosphatidylethanolamine biosynthesis; phosphatidylethanolamine from ethanolamine: step 1/3. Its function is as follows. Highly specific for ethanolamine phosphorylation. May be a rate-controlling step in phosphatidylethanolamine biosynthesis. In Drosophila melanogaster (Fruit fly), this protein is Ethanolamine kinase (eas).